The primary structure comprises 442 residues: 3-oxoacyl-[acyl-carrier-protein] synthase homolog (442 aa).

The 437-residue stretch at 2 to 438 (SRRVVITGLG…GVNTSLLFKK (437 aa)) folds into the Ketosynthase family 3 (KS3) domain. Catalysis depends on for beta-ketoacyl synthase activity residues cysteine 187, histidine 322, and histidine 362.

Belongs to the thiolase-like superfamily. Beta-ketoacyl-ACP synthases family.

The protein localises to the mitochondrion. The catalysed reaction is a fatty acyl-[ACP] + malonyl-[ACP] + H(+) = a 3-oxoacyl-[ACP] + holo-[ACP] + CO2. In terms of biological role, possibly involved in the synthesis of a specialized molecule, probably related to a fatty acid, which is essential for mitochondrial respiration. Is essential for oxygen uptake and the presence of cytochromes A and B. This is 3-oxoacyl-[acyl-carrier-protein] synthase homolog (CEM1) from Saccharomyces cerevisiae (strain ATCC 204508 / S288c) (Baker's yeast).